We begin with the raw amino-acid sequence, 203 residues long: Endo-type membrane-bound lytic murein transglycosylase A (203 aa).

The signal sequence occupies residues 1–15 (MKLRWLLILVVFLAG). C16 carries the N-palmitoyl cysteine lipid modification. A lipid anchor (S-diacylglycerol cysteine) is attached at C16.

The protein belongs to the transglycosylase Slt family.

It localises to the cell outer membrane. The catalysed reaction is Endolytic cleavage of the (1-&gt;4)-beta-glycosidic linkage between N-acetylmuramic acid (MurNAc) and N-acetylglucosamine (GlcNAc) residues in peptidoglycan with concomitant formation of a 1,6-anhydrobond in the MurNAc residue.. Its function is as follows. Murein-degrading enzyme. May play a role in recycling of muropeptides during cell elongation and/or cell division. Preferentially cleaves at a distance of more than two disaccharide units from the ends of the glycan chain. The protein is Endo-type membrane-bound lytic murein transglycosylase A of Klebsiella pneumoniae subsp. pneumoniae (strain ATCC 700721 / MGH 78578).